The chain runs to 437 residues: GTPase Der (437 aa).

EngA-type G domains follow at residues 4–167 (PVVA…PDEA) and 176–352 (IRFS…DNHR). GTP is bound by residues 10-17 (GRPNVGKS), 57-61 (DTGGI), 119-122 (NKVD), 182-189 (GRPNVGKS), 230-234 (DTAGM), and 295-298 (NKWD). The 85-residue stretch at 353 to 437 (KRISSSTLND…PIKLIVRARK (85 aa)) folds into the KH-like domain.

This sequence belongs to the TRAFAC class TrmE-Era-EngA-EngB-Septin-like GTPase superfamily. EngA (Der) GTPase family. As to quaternary structure, associates with the 50S ribosomal subunit.

GTPase that plays an essential role in the late steps of ribosome biogenesis. The polypeptide is GTPase Der (Leuconostoc citreum (strain KM20)).